Consider the following 116-residue polypeptide: Flagellar transcriptional regulator FlhD (116 aa).

This sequence belongs to the FlhD family. Homodimer; disulfide-linked. Forms a heterohexamer composed of two FlhC and four FlhD subunits. Each FlhC binds a FlhD dimer, forming a heterotrimer, and a hexamer assembles by dimerization of two heterotrimers.

It localises to the cytoplasm. Its function is as follows. Functions in complex with FlhC as a master transcriptional regulator that regulates transcription of several flagellar and non-flagellar operons by binding to their promoter region. Activates expression of class 2 flagellar genes, including fliA, which is a flagellum-specific sigma factor that turns on the class 3 genes. Also regulates genes whose products function in a variety of physiological pathways. The chain is Flagellar transcriptional regulator FlhD from Escherichia coli O9:H4 (strain HS).